Consider the following 447-residue polypeptide: Probable glycine dehydrogenase (decarboxylating) subunit 1 (447 aa).

It belongs to the GcvP family. N-terminal subunit subfamily. As to quaternary structure, the glycine cleavage system is composed of four proteins: P, T, L and H. In this organism, the P 'protein' is a heterodimer of two subunits.

It carries out the reaction N(6)-[(R)-lipoyl]-L-lysyl-[glycine-cleavage complex H protein] + glycine + H(+) = N(6)-[(R)-S(8)-aminomethyldihydrolipoyl]-L-lysyl-[glycine-cleavage complex H protein] + CO2. The glycine cleavage system catalyzes the degradation of glycine. The P protein binds the alpha-amino group of glycine through its pyridoxal phosphate cofactor; CO(2) is released and the remaining methylamine moiety is then transferred to the lipoamide cofactor of the H protein. The chain is Probable glycine dehydrogenase (decarboxylating) subunit 1 from Bacillus cytotoxicus (strain DSM 22905 / CIP 110041 / 391-98 / NVH 391-98).